Here is a 353-residue protein sequence, read N- to C-terminus: uncharacterized protein (353 aa).

A signal peptide spans 1–20 (MLMRSVCFILLAVLLFSLSA). Cysteine 21 is lipidated: N-palmitoyl cysteine. Cysteine 21 is lipidated: S-diacylglycerol cysteine.

It localises to the cell membrane. This is an uncharacterized protein from Bacillus subtilis (strain 168).